The chain runs to 260 residues: tRNA pseudouridine synthase A (260 aa).

Asp-52 serves as the catalytic Nucleophile. Tyr-110 is a binding site for substrate.

Belongs to the tRNA pseudouridine synthase TruA family. Homodimer.

The enzyme catalyses uridine(38/39/40) in tRNA = pseudouridine(38/39/40) in tRNA. Functionally, formation of pseudouridine at positions 38, 39 and 40 in the anticodon stem and loop of transfer RNAs. This chain is tRNA pseudouridine synthase A, found in Spiroplasma kunkelii.